The chain runs to 193 residues: Holliday junction branch migration complex subunit RuvA (193 aa).

Positions 1–64 (MIGRIAGTLL…EDAHLLFGFA (64 aa)) are domain I. A domain II region spans residues 65 to 144 (TATERNTFRE…DLGHAPGATP (80 aa)). Residues 145 to 151 (LADSAVD) form a flexible linker region. The interval 151-193 (DILNALLALGYSEKEAAQAIKQVPAGTGVSDGIKLALKALSKG) is domain III.

It belongs to the RuvA family. As to quaternary structure, homotetramer. Forms an RuvA(8)-RuvB(12)-Holliday junction (HJ) complex. HJ DNA is sandwiched between 2 RuvA tetramers; dsDNA enters through RuvA and exits via RuvB. An RuvB hexamer assembles on each DNA strand where it exits the tetramer. Each RuvB hexamer is contacted by two RuvA subunits (via domain III) on 2 adjacent RuvB subunits; this complex drives branch migration. In the full resolvosome a probable DNA-RuvA(4)-RuvB(12)-RuvC(2) complex forms which resolves the HJ.

Its subcellular location is the cytoplasm. Functionally, the RuvA-RuvB-RuvC complex processes Holliday junction (HJ) DNA during genetic recombination and DNA repair, while the RuvA-RuvB complex plays an important role in the rescue of blocked DNA replication forks via replication fork reversal (RFR). RuvA specifically binds to HJ cruciform DNA, conferring on it an open structure. The RuvB hexamer acts as an ATP-dependent pump, pulling dsDNA into and through the RuvAB complex. HJ branch migration allows RuvC to scan DNA until it finds its consensus sequence, where it cleaves and resolves the cruciform DNA. This is Holliday junction branch migration complex subunit RuvA from Cupriavidus metallidurans (strain ATCC 43123 / DSM 2839 / NBRC 102507 / CH34) (Ralstonia metallidurans).